Consider the following 241-residue polypeptide: Methylthioribulose-1-phosphate dehydratase (241 aa).

Over residues 1–12 (MSQEITQKDNND) the composition is skewed to basic and acidic residues. Residues 1–22 (MSQEITQKDNNDHLVQSSDPDH) form a disordered region. Residue Cys101 participates in substrate binding. Zn(2+)-binding residues include His118 and His120. Glu147 (proton donor/acceptor) is an active-site residue. Zn(2+) is bound at residue His203.

The protein belongs to the aldolase class II family. MtnB subfamily. Requires Zn(2+) as cofactor.

The protein localises to the cytoplasm. The catalysed reaction is 5-(methylsulfanyl)-D-ribulose 1-phosphate = 5-methylsulfanyl-2,3-dioxopentyl phosphate + H2O. Its pathway is amino-acid biosynthesis; L-methionine biosynthesis via salvage pathway; L-methionine from S-methyl-5-thio-alpha-D-ribose 1-phosphate: step 2/6. Catalyzes the dehydration of methylthioribulose-1-phosphate (MTRu-1-P) into 2,3-diketo-5-methylthiopentyl-1-phosphate (DK-MTP-1-P). This chain is Methylthioribulose-1-phosphate dehydratase, found in Aspergillus terreus (strain NIH 2624 / FGSC A1156).